A 294-amino-acid polypeptide reads, in one-letter code: NAD kinase (294 aa).

The Proton acceptor role is filled by D73. Residues 73-74 (DG), 147-148 (ND), R175, D177, and 188-193 (TAYALS) contribute to the NAD(+) site.

Belongs to the NAD kinase family. The cofactor is a divalent metal cation.

It is found in the cytoplasm. The enzyme catalyses NAD(+) + ATP = ADP + NADP(+) + H(+). Its function is as follows. Involved in the regulation of the intracellular balance of NAD and NADP, and is a key enzyme in the biosynthesis of NADP. Catalyzes specifically the phosphorylation on 2'-hydroxyl of the adenosine moiety of NAD to yield NADP. This is NAD kinase from Nitrosospira multiformis (strain ATCC 25196 / NCIMB 11849 / C 71).